We begin with the raw amino-acid sequence, 357 residues long: MTTAETKPATETGENAGTTGTAGTAATPEILNLARTKVLENGEPLNYEETLQVLQLGDEHLDELLDLAHQVRLKWCGDAVEMEGIISLQTGGCPEDCHFCAQSGLFESPVRSIQLDIAQLIEAAKQTAKTGATEFCIVAAVKGPDEDLMNQMAKAIAAIQAEVDINIAASIGILTQEQVDRLKELGVHRYNHNLETCKSYFPEVVTTHTWEERTSTLEMVRDAGMEVCCGGIVGMGETVEQRAEFAIDLQNLDPTEVPLNFFDPRPGTPFADLEPMPVNDALRTIGAFRLALPRQLLRFAGGRELTLGDLGAEKGLLGGINAVIVGNYLTTLGRPAERDVDMLGKLQLPIKALNATL.

Residues 1–27 are disordered; it reads MTTAETKPATETGENAGTTGTAGTAAT. The span at 9–27 shows a compositional bias: low complexity; sequence ATETGENAGTTGTAGTAAT. The region spanning 78–303 is the Radical SAM core domain; that stretch reads DAVEMEGIIS…RQLLRFAGGR (226 aa). [4Fe-4S] cluster-binding residues include C93, C97, and C100. Positions 136, 228, and 298 each coordinate [2Fe-2S] cluster.

The protein belongs to the radical SAM superfamily. Biotin synthase family. Homodimer. [4Fe-4S] cluster serves as cofactor. The cofactor is [2Fe-2S] cluster.

It catalyses the reaction (4R,5S)-dethiobiotin + (sulfur carrier)-SH + 2 reduced [2Fe-2S]-[ferredoxin] + 2 S-adenosyl-L-methionine = (sulfur carrier)-H + biotin + 2 5'-deoxyadenosine + 2 L-methionine + 2 oxidized [2Fe-2S]-[ferredoxin]. Its pathway is cofactor biosynthesis; biotin biosynthesis; biotin from 7,8-diaminononanoate: step 2/2. Its function is as follows. Catalyzes the conversion of dethiobiotin (DTB) to biotin by the insertion of a sulfur atom into dethiobiotin via a radical-based mechanism. The protein is Biotin synthase of Corynebacterium jeikeium (strain K411).